The primary structure comprises 440 residues: Thymidine phosphorylase (440 aa).

Belongs to the thymidine/pyrimidine-nucleoside phosphorylase family. As to quaternary structure, homodimer.

The enzyme catalyses thymidine + phosphate = 2-deoxy-alpha-D-ribose 1-phosphate + thymine. The protein operates within pyrimidine metabolism; dTMP biosynthesis via salvage pathway; dTMP from thymine: step 1/2. The enzymes which catalyze the reversible phosphorolysis of pyrimidine nucleosides are involved in the degradation of these compounds and in their utilization as carbon and energy sources, or in the rescue of pyrimidine bases for nucleotide synthesis. The protein is Thymidine phosphorylase of Salmonella paratyphi A (strain ATCC 9150 / SARB42).